Consider the following 294-residue polypeptide: 33 kDa chaperonin (294 aa).

Disulfide bonds link C230–C232 and C263–C266.

The protein belongs to the HSP33 family. Under oxidizing conditions two disulfide bonds are formed involving the reactive cysteines. Under reducing conditions zinc is bound to the reactive cysteines and the protein is inactive.

Its subcellular location is the cytoplasm. Functionally, redox regulated molecular chaperone. Protects both thermally unfolding and oxidatively damaged proteins from irreversible aggregation. Plays an important role in the bacterial defense system toward oxidative stress. The chain is 33 kDa chaperonin from Chromobacterium violaceum (strain ATCC 12472 / DSM 30191 / JCM 1249 / CCUG 213 / NBRC 12614 / NCIMB 9131 / NCTC 9757 / MK).